The sequence spans 238 residues: Protein CPn_0658/CP_0089/CPj0658/CpB0684 (238 aa).

Belongs to the chlamydial CPn_0658/CT_538/TC_0825 family.

This is Protein CPn_0658/CP_0089/CPj0658/CpB0684 from Chlamydia pneumoniae (Chlamydophila pneumoniae).